Reading from the N-terminus, the 121-residue chain is Alpha-lactalbumin (121 aa).

Residues 1–121 (IDYRKCQASQ…CLEDLDQWRC (121 aa)) form the C-type lysozyme domain. Intrachain disulfides connect Cys6-Cys121, Cys28-Cys112, Cys61-Cys77, and Cys73-Cys91. Asn44 is a glycosylation site (N-linked (GlcNAc...) asparagine). The Ca(2+) site is built by Lys79, Asp82, Asp84, Asp87, and Asp88.

Belongs to the glycosyl hydrolase 22 family. In terms of assembly, lactose synthase (LS) is a heterodimer of a catalytic component, beta1,4-galactosyltransferase (beta4Gal-T1) and a regulatory component, alpha-lactalbumin (LA). Mammary gland specific. Secreted in milk.

The protein resides in the secreted. Functionally, regulatory subunit of lactose synthase, changes the substrate specificity of galactosyltransferase in the mammary gland making glucose a good acceptor substrate for this enzyme. This enables LS to synthesize lactose, the major carbohydrate component of milk. In other tissues, galactosyltransferase transfers galactose onto the N-acetylglucosamine of the oligosaccharide chains in glycoproteins. This Notamacropus rufogriseus (Red-necked wallaby) protein is Alpha-lactalbumin (LALBA).